Reading from the N-terminus, the 170-residue chain is Acireductone dioxygenase (170 aa).

Fe(2+)-binding residues include H99, H101, E105, and H144. Residues H99, H101, E105, and H144 each coordinate Ni(2+).

The protein belongs to the acireductone dioxygenase (ARD) family. As to quaternary structure, monomer. Fe(2+) is required as a cofactor. Requires Ni(2+) as cofactor.

The catalysed reaction is 1,2-dihydroxy-5-(methylsulfanyl)pent-1-en-3-one + O2 = 3-(methylsulfanyl)propanoate + CO + formate + 2 H(+). It catalyses the reaction 1,2-dihydroxy-5-(methylsulfanyl)pent-1-en-3-one + O2 = 4-methylsulfanyl-2-oxobutanoate + formate + 2 H(+). It participates in amino-acid biosynthesis; L-methionine biosynthesis via salvage pathway; L-methionine from S-methyl-5-thio-alpha-D-ribose 1-phosphate: step 5/6. In terms of biological role, catalyzes 2 different reactions between oxygen and the acireductone 1,2-dihydroxy-3-keto-5-methylthiopentene (DHK-MTPene) depending upon the metal bound in the active site. Fe-containing acireductone dioxygenase (Fe-ARD) produces formate and 2-keto-4-methylthiobutyrate (KMTB), the alpha-ketoacid precursor of methionine in the methionine recycle pathway. Ni-containing acireductone dioxygenase (Ni-ARD) produces methylthiopropionate, carbon monoxide and formate, and does not lie on the methionine recycle pathway. The protein is Acireductone dioxygenase of Bacillus cereus (strain ATCC 14579 / DSM 31 / CCUG 7414 / JCM 2152 / NBRC 15305 / NCIMB 9373 / NCTC 2599 / NRRL B-3711).